The primary structure comprises 471 residues: UDP-N-acetylmuramate--L-alanine ligase (471 aa).

125–131 (GTHGKTT) contacts ATP.

It belongs to the MurCDEF family.

The protein localises to the cytoplasm. It catalyses the reaction UDP-N-acetyl-alpha-D-muramate + L-alanine + ATP = UDP-N-acetyl-alpha-D-muramoyl-L-alanine + ADP + phosphate + H(+). Its pathway is cell wall biogenesis; peptidoglycan biosynthesis. Functionally, cell wall formation. The polypeptide is UDP-N-acetylmuramate--L-alanine ligase (Kineococcus radiotolerans (strain ATCC BAA-149 / DSM 14245 / SRS30216)).